We begin with the raw amino-acid sequence, 779 residues long: Filament-like plant protein 1 (779 aa).

The segment covering 1–14 has biased composition (basic and acidic residues); the sequence is MEKRKRESSERSFG. Disordered stretches follow at residues 1–55, 253–274, and 315–336; these read MEKR…ETEK, ASFN…MDVS, and PETP…VVVP. Residues 47-200 adopt a coiled-coil conformation; that stretch reads VSLEVETEKE…KENVMLRHEL (154 aa). Basic and acidic residues predominate over residues 256–272; sequence NDHRSTDSHSDGGERMD. The span at 324–336 shows a compositional bias: low complexity; it reads SGPESVTEEVVVP. Residues 337–674 are a coiled coil; it reads SENSLASEIE…ANCQKTIASL (338 aa). A compositionally biased stretch (basic and acidic residues) spans 718 to 731; sequence FMTRNHPESIKPTK. Residues 718–764 form a disordered region; that stretch reads FMTRNHPESIKPTKETSPSSSSSTASAAVSMPVSTNRGSSEKNRNGF. The span at 733–752 shows a compositional bias: low complexity; it reads TSPSSSSSTASAAVSMPVST.

The protein belongs to the FPP family. As to quaternary structure, interacts with WPP/MAF proteins.

This chain is Filament-like plant protein 1 (FPP1), found in Arabidopsis thaliana (Mouse-ear cress).